The primary structure comprises 747 residues: Eukaryotic translation initiation factor 3 subunit B (747 aa).

The region spanning 42-128 (AFVVVDGLPE…HTLRVNKLTD (87 aa)) is the RRM domain. WD repeat units lie at residues 195–234 (DRQH…RQRR), 236–292 (AHPF…PLRS), 310–349 (APKF…LLDK), 520–563 (LEKK…EKPE), and 578–623 (ADHY…LREE).

It belongs to the eIF-3 subunit B family. As to quaternary structure, component of the eukaryotic translation initiation factor 3 (eIF-3) complex.

It is found in the cytoplasm. In terms of biological role, RNA-binding component of the eukaryotic translation initiation factor 3 (eIF-3) complex, which is involved in protein synthesis of a specialized repertoire of mRNAs and, together with other initiation factors, stimulates binding of mRNA and methionyl-tRNAi to the 40S ribosome. The eIF-3 complex specifically targets and initiates translation of a subset of mRNAs involved in cell proliferation. This Neurospora crassa (strain ATCC 24698 / 74-OR23-1A / CBS 708.71 / DSM 1257 / FGSC 987) protein is Eukaryotic translation initiation factor 3 subunit B (prt-1).